We begin with the raw amino-acid sequence, 542 residues long: MKSKRRDDIVQFCRENTLLVMTMFSVFLGVVLGFGLRPLNLSQETLQLINFPGEIFMQVLKMMILPLIFSSLISALAQMDAKESGQMGASTVLYYLSTAVLATILGIFLVTVIHPGDPSIKGTDISEAPSDGNVSPLDTFLDLVRNMFPENIIQATFERMQTTYVAIRPKIASKNGTSGNIIVKRSIGMTKGMNILGIIVFCTGFGIVISQLGERARIVVDFFVILDAVIMRWVVTLMWFAPLGITCLICGNLLELDDISDIASVLALYVFTVCAGLILHTIITVPLMYFFITRENPLPIFKGMIQAAVTAFGTASGGATLPMSMQCLEDHCGVDRRISRFVLPLGSTINMDGNALYEAVAVIFIAQLNNVQLSLAEVLTVSITATIASIGLGSVPAGLVSILLILNTVGLPVRDVSMLFTVDWLLDRVRTAVNVLGDAFAASMVQHLLQKKLDQADARHDYKTELKGEIELLKSAATSRRPSFTMSEASKELFLTHANTAGNSRIGSRIGSRRPSSTNLHLSWRNNNIEPPYTPLPNDENV.

At 1–15 the chain is on the cytoplasmic side; it reads MKSKRRDDIVQFCRE. 3 consecutive transmembrane segments (helical) span residues 16–36, 55–75, and 93–113; these read NTLL…GFGL, IFMQ…LISA, and LYYL…VTVI. Residues 114–191 are Extracellular-facing; it reads HPGDPSIKGT…IVKRSIGMTK (78 aa). Asn175 carries N-linked (GlcNAc...) asparagine glycosylation. 5 helical membrane-spanning segments follow: residues 192–212, 234–254, 265–285, 303–323, and 386–406; these read GMNI…ISQL, VVTL…GNLL, VLAL…IITV, GMIQ…TLPM, and TIAS…LLIL. Residues 505-517 are compositionally biased toward low complexity; sequence RIGSRIGSRRPSS. The disordered stretch occupies residues 505–542; it reads RIGSRIGSRRPSSTNLHLSWRNNNIEPPYTPLPNDENV. Positions 518–529 are enriched in polar residues; it reads TNLHLSWRNNNI.

It belongs to the dicarboxylate/amino acid:cation symporter (DAACS) (TC 2.A.23) family.

It is found in the membrane. The chain is Putative sodium-dependent excitatory amino acid transporter glt-6 (glt-6) from Caenorhabditis elegans.